The chain runs to 177 residues: Protein OPG036 (177 aa).

This sequence belongs to the poxviridae OPG036 family.

It is found in the host nucleus. Its function is as follows. Plays a role in the inhibition of host innate immune response. Within the host nucleus, inhibits activation of interferon-beta promoter by inhibiting IRF3 activation. This chain is Protein OPG036 (OPG036), found in Homo sapiens (Human).